A 607-amino-acid polypeptide reads, in one-letter code: Runt-related transcription factor 2 (607 aa).

Residues 1–88 (MLHSPHKQPQ…TMASNSLFSA (88 aa)) are interaction with IFI204. Residues 100-112 (PSTSRRFSPPSSS) are compositionally biased toward low complexity. The disordered stretch occupies residues 100 to 126 (PSTSRRFSPPSSSLQPGKMSDVSPVVA). The region spanning 187 to 315 (TMVEIIADHP…TVDGPREPRR (129 aa)) is the Runt domain. Residues 242–258 (VMAGNDENYSAELRNAS) form a required for interaction with FOXO1 region. The interval 307-430 (VDGPREPRRH…VPRRISDDDT (124 aa)) is disordered. Lys-324 is covalently cross-linked (Glycyl lysine isopeptide (Lys-Gly) (interchain with G-Cter in SUMO2)). Residue Arg-353 is modified to Asymmetric dimethylarginine. The segment covering 353–412 (RPSLNSAPSPFNPQGQSQITDPRQAQSSPPWSYDQSYPSYLSQMTSPSIHSTTPLSSTRG) has biased composition (polar residues). Residues 422-525 (PRRISDDDTA…SQSQSGPFQT (104 aa)) form an interaction with KAT6A region. An interaction with KAT6B region spans residues 460-554 (RQFPSISSLT…VPGGDRSPSR (95 aa)). Ser-537 carries the post-translational modification Phosphoserine; by CDK1. The segment at 548 to 607 (GDRSPSRMVPPCTTTSNGSTLLNPNLPNQNDGVDADGSHSSSPTVLNSSGRMDESVWRPY) is disordered. Polar residues-rich tracts occupy residues 559-578 (CTTT…NQND) and 585-597 (SHSS…NSSG). Positions 598–607 (RMDESVWRPY) are enriched in basic and acidic residues.

As to quaternary structure, heterodimer of an alpha and a beta subunit. The alpha subunit binds DNA as a monomer and through the Runt domain. DNA-binding is increased by heterodimerization. Interacts with XRCC6 (Ku70) and XRCC5 (Ku80). Interacts with CCNB1, KAT6A and KAT6B. Interacts with HIVEP3. Interacts with IFI204. Interaction with SATB2; the interaction results in enhanced DNA binding and transactivation by these transcription factors. Binds to HIPK3. Interacts with FOXO1 (via a C-terminal region); the interaction inhibits RUNX2 transcriptional activity towards BGLAP. Interacts with FOXP3. Interacts with TMEM119. Interacts with OLFM2. Interacts with IPO7; the interaction inhibits RUNX2 nuclear translocation in osteoblasts. Interacts with DDX5. Phosphorylated; probably by MAP kinases (MAPK). Phosphorylation by HIPK3 is required for the SPEN/MINT and FGF2 transactivation during osteoblastic differentiation. Phosphorylation at Ser-537 by CDK1 promotes endothelial cell proliferation required for tumor angiogenesis probably by facilitating cell cycle progression. In terms of tissue distribution, found in thymus and testis, T-cell lines but not in B-cell lines. Isoform 2 is exclusively found in bone, particularly in osteoblasts; isoforms 3 and 4 are expressed in T-cell lines; isoforms 5, 6, 7, 8 and 9 can be found in osteoblasts and osteosarcoma cell lines.

It localises to the nucleus. It is found in the cytoplasm. Its function is as follows. Transcription factor involved in osteoblastic differentiation and skeletal morphogenesis. Essential for the maturation of osteoblasts and both intramembranous and endochondral ossification. CBF binds to the core site, 5'-PYGPYGGT-3', of a number of enhancers and promoters, including murine leukemia virus, polyomavirus enhancer, T-cell receptor enhancers, osteocalcin, osteopontin, bone sialoprotein, alpha 1(I) collagen, LCK, IL-3 and GM-CSF promoters. Inhibits KAT6B-dependent transcriptional activation. In osteoblasts, supports transcription activation: synergizes with SPEN/MINT to enhance FGFR2-mediated activation of the osteocalcin FGF-responsive element (OCFRE). The protein is Runt-related transcription factor 2 (Runx2) of Mus musculus (Mouse).